A 561-amino-acid polypeptide reads, in one-letter code: Asparagine synthetase [glutamine-hydrolyzing] (561 aa).

Cysteine 2 functions as the For GATase activity in the catalytic mechanism. A Glutamine amidotransferase type-2 domain is found at 2–191; sequence CGIWALFGSD…PGHYEVLDLK (190 aa). L-glutamine contacts are provided by residues 49 to 53, 75 to 77, and aspartate 97; these read RLAVV and NGE. Positions 213–536 constitute an Asparagine synthetase domain; the sequence is HALYDSVEKL…PGRADWLTHY (324 aa). ATP is bound by residues leucine 256, isoleucine 288, and 363–364; that span reads SG. N6-acetyllysine is present on lysine 385. Residue threonine 545 is modified to Phosphothreonine. Serine 557 carries the phosphoserine modification.

It catalyses the reaction L-aspartate + L-glutamine + ATP + H2O = L-asparagine + L-glutamate + AMP + diphosphate + H(+). Its pathway is amino-acid biosynthesis; L-asparagine biosynthesis; L-asparagine from L-aspartate (L-Gln route): step 1/1. The sequence is that of Asparagine synthetase [glutamine-hydrolyzing] (ASNS) from Mesocricetus auratus (Golden hamster).